The chain runs to 608 residues: Lysophospholipase 2 (608 aa).

A signal peptide spans 1-17; sequence MLVWQSILLFLVGCVLS. Positions 30 to 564 constitute a PLA2c domain; that stretch reads QCPEGKLTRS…ENYCWDGTIY (535 aa). Asn259, Asn365, Asn450, Asn464, Asn491, and Asn572 each carry an N-linked (GlcNAc...) asparagine glycan.

The protein belongs to the lysophospholipase family.

It is found in the secreted. The enzyme catalyses a 1-acyl-sn-glycero-3-phosphocholine + H2O = sn-glycerol 3-phosphocholine + a fatty acid + H(+). In terms of biological role, catalyzes the release of fatty acids from lysophospholipids. Phospholipase B may well contribute to pathogenicity by abetting the fungus in damaging and traversing host cell membranes, processes which likely increase the rapidity of disseminated infection. This Candida albicans (Yeast) protein is Lysophospholipase 2 (PLB2).